Consider the following 397-residue polypeptide: Ubiquitin-like modifier-activating enzyme 5 (397 aa).

ATP contacts are provided by G76, D97, K120, N143, and N177. Zn(2+) contacts are provided by C219 and C222. The Glycyl thioester intermediate role is filled by C243. The Zn(2+) site is built by C296 and C301. Positions 362–384 (LAYEPPASTKHSETTSTTAVSDD) are disordered. Residues 375-384 (TTSTTAVSDD) are compositionally biased toward low complexity.

Belongs to the ubiquitin-activating E1 family. UBA5 subfamily.

E1-like enzyme which activates UFM1. The protein is Ubiquitin-like modifier-activating enzyme 5 of Aedes aegypti (Yellowfever mosquito).